A 312-amino-acid chain; its full sequence is uncharacterized protein (312 aa).

This is an uncharacterized protein from Saccharomyces cerevisiae (strain ATCC 204508 / S288c) (Baker's yeast).